Here is a 205-residue protein sequence, read N- to C-terminus: Large ribosomal subunit protein uL18 (205 aa).

The protein belongs to the universal ribosomal protein uL18 family. In terms of assembly, part of the 50S ribosomal subunit. Contacts the 5S and 23S rRNAs.

Functionally, this is one of the proteins that bind and probably mediate the attachment of the 5S RNA into the large ribosomal subunit, where it forms part of the central protuberance. The protein is Large ribosomal subunit protein uL18 of Pyrobaculum islandicum (strain DSM 4184 / JCM 9189 / GEO3).